The following is a 74-amino-acid chain: uncharacterized protein (74 aa).

The segment at 55–74 is disordered; it reads DENSESESKDGASWFKVYRG.

This is an uncharacterized protein from Listeria innocua serovar 6a (strain ATCC BAA-680 / CLIP 11262).